The sequence spans 429 residues: Ribonuclease E/G-like protein (429 aa).

Mg(2+) contacts are provided by aspartate 290 and aspartate 332.

This sequence belongs to the RNase E/G family. It depends on Mg(2+) as a cofactor.

The protein localises to the plastid. It localises to the chloroplast stroma. Its function is as follows. Involved in intercistronic processing of primary transcripts from chloroplast operons. The endonucleolytic activity of the enzyme depends on the number of phosphates at the 5' end, is inhibited by structured RNA, and preferentially cleaves A/U-rich sequences. This Guillardia theta (Cryptophyte) protein is Ribonuclease E/G-like protein (rne).